Consider the following 247-residue polypeptide: 3-deoxy-manno-octulosonate cytidylyltransferase (247 aa).

This sequence belongs to the KdsB family.

It localises to the cytoplasm. It carries out the reaction 3-deoxy-alpha-D-manno-oct-2-ulosonate + CTP = CMP-3-deoxy-beta-D-manno-octulosonate + diphosphate. The protein operates within nucleotide-sugar biosynthesis; CMP-3-deoxy-D-manno-octulosonate biosynthesis; CMP-3-deoxy-D-manno-octulosonate from 3-deoxy-D-manno-octulosonate and CTP: step 1/1. Its pathway is bacterial outer membrane biogenesis; lipopolysaccharide biosynthesis. In terms of biological role, activates KDO (a required 8-carbon sugar) for incorporation into bacterial lipopolysaccharide in Gram-negative bacteria. The polypeptide is 3-deoxy-manno-octulosonate cytidylyltransferase (Methylorubrum extorquens (strain CM4 / NCIMB 13688) (Methylobacterium extorquens)).